The primary structure comprises 327 residues: Deaminated glutathione amidase (327 aa).

Residues 1–13 (MLGFITRPPHRFL) constitute a mitochondrion transit peptide. The 253-residue stretch at 46-298 (LPLVAVCQVT…PGLCLARIDL (253 aa)) folds into the CN hydrolase domain. The Proton acceptor role is filled by Glu86. Lys161 serves as the catalytic Proton donor. Catalysis depends on Cys203, which acts as the Nucleophile.

This sequence belongs to the carbon-nitrogen hydrolase superfamily. NIT1/NIT2 family. As to expression, detected in heart, brain, placenta, liver, skeletal muscle, kidney and pancreas.

The protein resides in the mitochondrion. Its subcellular location is the cytoplasm. The catalysed reaction is N-(4-oxoglutaryl)-L-cysteinylglycine + H2O = L-cysteinylglycine + 2-oxoglutarate. Functionally, catalyzes the hydrolysis of the amide bond in N-(4-oxoglutarate)-L-cysteinylglycine (deaminated glutathione), a metabolite repair reaction to dispose of the harmful deaminated glutathione. Plays a role in cell growth and apoptosis: loss of expression promotes cell growth, resistance to DNA damage stress and increased incidence to NMBA-induced tumors. Has tumor suppressor properties that enhances the apoptotic responsiveness in cancer cells; this effect is additive to the tumor suppressor activity of FHIT. It is also a negative regulator of primary T-cells. This chain is Deaminated glutathione amidase (NIT1), found in Homo sapiens (Human).